Here is a 692-residue protein sequence, read N- to C-terminus: Elongation factor G (692 aa).

In terms of domain architecture, tr-type G spans 8-282; the sequence is ERTRNIGIMA…AIVDYLPAPT (275 aa). GTP is bound by residues 17–24, 81–85, and 135–138; these read AHIDAGKT, DTPGH, and NKMD.

The protein belongs to the TRAFAC class translation factor GTPase superfamily. Classic translation factor GTPase family. EF-G/EF-2 subfamily.

It is found in the cytoplasm. Its function is as follows. Catalyzes the GTP-dependent ribosomal translocation step during translation elongation. During this step, the ribosome changes from the pre-translocational (PRE) to the post-translocational (POST) state as the newly formed A-site-bound peptidyl-tRNA and P-site-bound deacylated tRNA move to the P and E sites, respectively. Catalyzes the coordinated movement of the two tRNA molecules, the mRNA and conformational changes in the ribosome. The protein is Elongation factor G of Desulforamulus reducens (strain ATCC BAA-1160 / DSM 100696 / MI-1) (Desulfotomaculum reducens).